The chain runs to 332 residues: 5-dehydro-2-deoxygluconokinase (332 aa).

It belongs to the carbohydrate kinase PfkB family.

The catalysed reaction is 5-dehydro-2-deoxy-D-gluconate + ATP = 6-phospho-5-dehydro-2-deoxy-D-gluconate + ADP + H(+). Its pathway is polyol metabolism; myo-inositol degradation into acetyl-CoA; acetyl-CoA from myo-inositol: step 5/7. Catalyzes the phosphorylation of 5-dehydro-2-deoxy-D-gluconate (2-deoxy-5-keto-D-gluconate or DKG) to 6-phospho-5-dehydro-2-deoxy-D-gluconate (DKGP). The sequence is that of 5-dehydro-2-deoxygluconokinase from Bacillus thuringiensis subsp. konkukian (strain 97-27).